A 195-amino-acid chain; its full sequence is dITP/XTP pyrophosphatase (195 aa).

Substrate is bound at residue 9 to 14; sequence TNNQGK. The Mg(2+) site is built by Glu-39 and Asp-68. The active-site Proton acceptor is the Asp-68. Substrate contacts are provided by residues Ser-69, 146-149, Lys-169, and 174-175; these read FGYD and HR.

This sequence belongs to the HAM1 NTPase family. As to quaternary structure, homodimer. Mg(2+) is required as a cofactor.

It catalyses the reaction XTP + H2O = XMP + diphosphate + H(+). The enzyme catalyses dITP + H2O = dIMP + diphosphate + H(+). The catalysed reaction is ITP + H2O = IMP + diphosphate + H(+). In terms of biological role, pyrophosphatase that catalyzes the hydrolysis of nucleoside triphosphates to their monophosphate derivatives, with a high preference for the non-canonical purine nucleotides XTP (xanthosine triphosphate), dITP (deoxyinosine triphosphate) and ITP. Seems to function as a house-cleaning enzyme that removes non-canonical purine nucleotides from the nucleotide pool, thus preventing their incorporation into DNA/RNA and avoiding chromosomal lesions. The polypeptide is dITP/XTP pyrophosphatase (Gloeobacter violaceus (strain ATCC 29082 / PCC 7421)).